A 404-amino-acid chain; its full sequence is Tryptophan synthase beta chain (404 aa).

An N6-(pyridoxal phosphate)lysine modification is found at Lys-94.

It belongs to the TrpB family. As to quaternary structure, tetramer of two alpha and two beta chains. The cofactor is pyridoxal 5'-phosphate.

It catalyses the reaction (1S,2R)-1-C-(indol-3-yl)glycerol 3-phosphate + L-serine = D-glyceraldehyde 3-phosphate + L-tryptophan + H2O. The protein operates within amino-acid biosynthesis; L-tryptophan biosynthesis; L-tryptophan from chorismate: step 5/5. Functionally, the beta subunit is responsible for the synthesis of L-tryptophan from indole and L-serine. The protein is Tryptophan synthase beta chain of Staphylococcus aureus (strain USA300).